We begin with the raw amino-acid sequence, 317 residues long: tRNA dimethylallyltransferase (317 aa).

Residue 14-21 participates in ATP binding; it reads GPTAVGKT. Residue 16 to 21 participates in substrate binding; sequence TAVGKT. Positions 39–42 are interaction with substrate tRNA; it reads DSMQ.

It belongs to the IPP transferase family. As to quaternary structure, monomer. The cofactor is Mg(2+).

It catalyses the reaction adenosine(37) in tRNA + dimethylallyl diphosphate = N(6)-dimethylallyladenosine(37) in tRNA + diphosphate. Catalyzes the transfer of a dimethylallyl group onto the adenine at position 37 in tRNAs that read codons beginning with uridine, leading to the formation of N6-(dimethylallyl)adenosine (i(6)A). The sequence is that of tRNA dimethylallyltransferase from Bacillus cereus (strain AH187).